The primary structure comprises 404 residues: Nicotinate phosphoribosyltransferase (404 aa).

His225 bears the Phosphohistidine; by autocatalysis mark.

The protein belongs to the NAPRTase family. In terms of processing, transiently phosphorylated on a His residue during the reaction cycle. Phosphorylation strongly increases the affinity for substrates and increases the rate of nicotinate D-ribonucleotide production. Dephosphorylation regenerates the low-affinity form of the enzyme, leading to product release.

The catalysed reaction is nicotinate + 5-phospho-alpha-D-ribose 1-diphosphate + ATP + H2O = nicotinate beta-D-ribonucleotide + ADP + phosphate + diphosphate. It functions in the pathway cofactor biosynthesis; NAD(+) biosynthesis; nicotinate D-ribonucleotide from nicotinate: step 1/1. Functionally, catalyzes the synthesis of beta-nicotinate D-ribonucleotide from nicotinate and 5-phospho-D-ribose 1-phosphate at the expense of ATP. The polypeptide is Nicotinate phosphoribosyltransferase (Acinetobacter baumannii (strain ATCC 17978 / DSM 105126 / CIP 53.77 / LMG 1025 / NCDC KC755 / 5377)).